The chain runs to 629 residues: tRNA uridine 5-carboxymethylaminomethyl modification enzyme MnmG (629 aa).

Residue G4–G9 participates in FAD binding. Position 268-282 (G268–F282) interacts with NAD(+).

This sequence belongs to the MnmG family. As to quaternary structure, homodimer. Heterotetramer of two MnmE and two MnmG subunits. The cofactor is FAD.

The protein resides in the cytoplasm. NAD-binding protein involved in the addition of a carboxymethylaminomethyl (cmnm) group at the wobble position (U34) of certain tRNAs, forming tRNA-cmnm(5)s(2)U34. This Helicobacter hepaticus (strain ATCC 51449 / 3B1) protein is tRNA uridine 5-carboxymethylaminomethyl modification enzyme MnmG.